A 593-amino-acid polypeptide reads, in one-letter code: Mitochondrial sodium/calcium exchanger protein (593 aa).

The signal sequence occupies residues Met-1–Ala-20. Residues Gly-21–Leu-93 lie on the Extracellular side of the membrane. N-linked (GlcNAc...) asparagine glycosylation occurs at Asn-58. A helical membrane pass occupies residues Leu-94–Val-114. Residues Thr-115–His-135 are Cytoplasmic-facing. Residues Asn-136–Gly-158 form a helical membrane-spanning segment. The Extracellular segment spans residues Asn-159–Gly-178. The helical transmembrane segment at Leu-179 to Ile-199 threads the bilayer. At Ala-200 to Asp-215 the chain is on the cytoplasmic side. Residues Val-216–Thr-236 traverse the membrane as a helical segment. Over Leu-237 to Glu-239 the chain is Extracellular. Residues Ala-240–Ile-260 form a helical membrane-spanning segment. At His-261–Arg-334 the chain is on the cytoplasmic side. Over residues Gly-268–Pro-277 the composition is skewed to pro residues. The disordered stretch occupies residues Gly-268–Thr-291. The helical transmembrane segment at Leu-335–Asp-355 threads the bilayer. The Extracellular segment spans residues Pro-356–Cys-369. Residues Leu-370 to Leu-390 traverse the membrane as a helical segment. At Tyr-391–Gly-395 the chain is on the cytoplasmic side. Residues Val-396 to Val-416 traverse the membrane as a helical segment. Topologically, residues Thr-417–Cys-428 are extracellular. Residues Val-429–Leu-449 form a helical membrane-spanning segment. Residues Val-450–Arg-454 are Cytoplasmic-facing. The helical transmembrane segment at Thr-455–Gly-475 threads the bilayer. Over Asn-476–Ala-496 the chain is Extracellular. A helical membrane pass occupies residues Phe-497–Leu-517. The Cytoplasmic portion of the chain corresponds to Leu-518–Ser-533. The helical transmembrane segment at Leu-534–Val-554 threads the bilayer. Over Pro-555–Ala-564 the chain is Extracellular. Residues Tyr-565–Phe-585 form a helical membrane-spanning segment. Over Arg-586–Thr-593 the chain is Cytoplasmic.

Belongs to the Ca(2+):cation antiporter (CaCA) (TC 2.A.19) family. SLC24A subfamily.

The protein resides in the mitochondrion inner membrane. It carries out the reaction Ca(2+)(in) + 3 Na(+)(out) = Ca(2+)(out) + 3 Na(+)(in). In terms of biological role, mitochondrial sodium/calcium antiporter that mediates sodium-dependent calcium efflux from mitochondrion, by mediating the exchange of 3 sodium ions per 1 calcium ion. Plays a central role in mitochondrial calcium homeostasis by mediating mitochondrial calcium extrusion: calcium efflux is essential for mitochondrial function and cell survival, notably in cardiomyocytes. Involved in B-lymphocyte chemotaxis. The protein is Mitochondrial sodium/calcium exchanger protein of Gallus gallus (Chicken).